The primary structure comprises 306 residues: NADH-cytochrome b5 reductase 2-B (306 aa).

A helical transmembrane segment spans residues 12 to 32 (PLLLSSGIAVTAAAAVYFSTG). Residues 53 to 157 (STWVDLPLVK…TGPIVKYEWK (105 aa)) enclose the FAD-binding FR-type domain. 160–195 (KFDSVTLLGAGSGITPLYQLMGSILSNPEDKTKINL) contributes to the FAD binding site.

Belongs to the flavoprotein pyridine nucleotide cytochrome reductase family. FAD serves as cofactor.

It localises to the mitochondrion outer membrane. It catalyses the reaction 2 Fe(III)-[cytochrome b5] + NADH = 2 Fe(II)-[cytochrome b5] + NAD(+) + H(+). Its function is as follows. May mediate the reduction of outer membrane cytochrome b5. This is NADH-cytochrome b5 reductase 2-B (MCR1B) from Vanderwaltozyma polyspora (strain ATCC 22028 / DSM 70294 / BCRC 21397 / CBS 2163 / NBRC 10782 / NRRL Y-8283 / UCD 57-17) (Kluyveromyces polysporus).